The sequence spans 153 residues: Urease accessory protein UreE (153 aa).

It belongs to the UreE family.

It localises to the cytoplasm. Involved in urease metallocenter assembly. Binds nickel. Probably functions as a nickel donor during metallocenter assembly. In Acetivibrio thermocellus (strain ATCC 27405 / DSM 1237 / JCM 9322 / NBRC 103400 / NCIMB 10682 / NRRL B-4536 / VPI 7372) (Clostridium thermocellum), this protein is Urease accessory protein UreE.